A 556-amino-acid polypeptide reads, in one-letter code: PTS system fructose-specific EIIB'BC component (556 aa).

PTS EIIB type-2 domains lie at 1 to 85 (MKLF…LANG) and 106 to 201 (IVAV…KAFK). Residue C112 is the Phosphocysteine intermediate; for EIIB activity of the active site. Position 112 is a phosphocysteine; by EIIA (C112). The PTS EIIC type-2 domain maps to 224-556 (VYKHLMTGVS…AIIKSKNNAE (333 aa)). Transmembrane regions (helical) follow at residues 237–257 (PLVVAGGLLIAISFMFSFNVI), 275–295 (SGVAFKLMIAVFAGYVAFSIA), 302–322 (VGLIAGMLASEAGAGILGGII), 324–344 (GFLAGYVVKGLNVIIRLPASL), 349–369 (PILILPLLGSMIVGLTMIYLI), 390–410 (VNAIVLGAIIGAMMCIDMGGP), 431–451 (MAAAMAAGMVPPIGMTVATWI), 468–488 (FVLGLCFISEGALPFVAADPI), 490–510 (VIISSVIGGAVAGAISMGLNI), and 529–549 (LKYLGAIAIGALSTGVVYAII).

The protein localises to the cell inner membrane. The catalysed reaction is D-fructose(out) + N(pros)-phospho-L-histidyl-[protein] = D-fructose 1-phosphate(in) + L-histidyl-[protein]. The phosphoenolpyruvate-dependent sugar phosphotransferase system (sugar PTS), a major carbohydrate active transport system, catalyzes the phosphorylation of incoming sugar substrates concomitantly with their translocation across the cell membrane. The enzyme II FruAB PTS system is involved in fructose transport. The polypeptide is PTS system fructose-specific EIIB'BC component (Haemophilus influenzae (strain ATCC 51907 / DSM 11121 / KW20 / Rd)).